A 216-amino-acid polypeptide reads, in one-letter code: Adenylate kinase (216 aa).

G10–T15 contacts ATP. An NMP region spans residues S30–V59. AMP contacts are provided by residues T31, R36, L57–V59, G85–R88, and Q92. Positions G126–D163 are LID. R127 contributes to the ATP binding site. Zn(2+) contacts are provided by C130 and C133. An ATP-binding site is contributed by T136–F137. Zn(2+)-binding residues include C150 and C153. Residues R160 and R171 each contribute to the AMP site. K199 lines the ATP pocket.

The protein belongs to the adenylate kinase family. Monomer.

It localises to the cytoplasm. It catalyses the reaction AMP + ATP = 2 ADP. It functions in the pathway purine metabolism; AMP biosynthesis via salvage pathway; AMP from ADP: step 1/1. Functionally, catalyzes the reversible transfer of the terminal phosphate group between ATP and AMP. Plays an important role in cellular energy homeostasis and in adenine nucleotide metabolism. In Alkaliphilus oremlandii (strain OhILAs) (Clostridium oremlandii (strain OhILAs)), this protein is Adenylate kinase.